The sequence spans 423 residues: UPF0597 protein CTC_02309 (423 aa).

Belongs to the UPF0597 family.

The protein is UPF0597 protein CTC_02309 of Clostridium tetani (strain Massachusetts / E88).